A 470-amino-acid polypeptide reads, in one-letter code: Ribulose bisphosphate carboxylase large chain (470 aa).

Residues Asn115 and Thr165 each coordinate substrate. Lys167 acts as the Proton acceptor in catalysis. Lys169 serves as a coordination point for substrate. Residues Lys193, Asp195, and Glu196 each coordinate Mg(2+). Lys193 carries the N6-carboxylysine modification. Residue His286 is the Proton acceptor of the active site. 3 residues coordinate substrate: Arg287, His319, and Ser371.

It belongs to the RuBisCO large chain family. Type I subfamily. In terms of assembly, heterohexadecamer of 8 large chains and 8 small chains. It depends on Mg(2+) as a cofactor.

The protein localises to the carboxysome. It carries out the reaction 2 (2R)-3-phosphoglycerate + 2 H(+) = D-ribulose 1,5-bisphosphate + CO2 + H2O. The catalysed reaction is D-ribulose 1,5-bisphosphate + O2 = 2-phosphoglycolate + (2R)-3-phosphoglycerate + 2 H(+). RuBisCO catalyzes two reactions: the carboxylation of D-ribulose 1,5-bisphosphate, the primary event in carbon dioxide fixation, as well as the oxidative fragmentation of the pentose substrate in the photorespiration process. Both reactions occur simultaneously and in competition at the same active site. This Synechococcus sp. (strain CC9311) protein is Ribulose bisphosphate carboxylase large chain.